Here is an 84-residue protein sequence, read N- to C-terminus: MANIVSNEKTYRHTQKVRKENHAKMSKLRTIVKKTRSSNEQAQLNEAYKVIDTTASKGVIHKNKANRLKSRTAKAFKANLQVVA.

The tract at residues Met-1–Met-25 is disordered.

This sequence belongs to the bacterial ribosomal protein bS20 family.

Its function is as follows. Binds directly to 16S ribosomal RNA. The sequence is that of Small ribosomal subunit protein bS20 from Ureaplasma urealyticum serovar 10 (strain ATCC 33699 / Western).